An 870-amino-acid chain; its full sequence is DNA polymerase kappa (870 aa).

The 256-residue stretch at 103–358 (IVHIDMDAFY…LPIRKVSGIG (256 aa)) folds into the UmuC domain. Mg(2+) contacts are provided by Asp-107, Asp-198, and Glu-199. UBZ4-type zinc fingers lie at residues 621–651 (ILTCPVCFRAQGCISLEALNKHVDECLDGPS) and 776–806 (ALVCPVCNVEQKTSDLTLFNVHVDVCLNKSF). Cys-624, Cys-627, His-642, Cys-646, Cys-779, Cys-782, His-797, and Cys-801 together coordinate Zn(2+). The interval 816 to 858 (NPVNQPKESSRSTGSSSGVQKAVTRTKRPGLMTKYSTSKKIKP) is disordered.

This sequence belongs to the DNA polymerase type-Y family. In terms of assembly, interacts with REV1. Interacts with PCNA. The cofactor is Mg(2+). Mn(2+) is required as a cofactor. As to expression, detected at low levels in testis, spleen, prostate and ovary. Detected at very low levels in kidney, colon, brain, heart, liver, lung, placenta, pancreas and peripheral blood leukocytes.

It localises to the nucleus. It catalyses the reaction DNA(n) + a 2'-deoxyribonucleoside 5'-triphosphate = DNA(n+1) + diphosphate. Functionally, DNA polymerase specifically involved in DNA repair. Plays an important role in translesion synthesis, where the normal high-fidelity DNA polymerases cannot proceed and DNA synthesis stalls. Depending on the context, it inserts the correct base, but causes frequent base transitions, transversions and frameshifts. Lacks 3'-5' proofreading exonuclease activity. Forms a Schiff base with 5'-deoxyribose phosphate at abasic sites, but does not have lyase activity. This chain is DNA polymerase kappa (POLK), found in Homo sapiens (Human).